Here is a 633-residue protein sequence, read N- to C-terminus: MSKLLDTINSPSDLKKLSLDELRELAVQIREELVNRVTLNGGHLASSLGVVELTIALHRVFESPKDKIIWDVGHQSYAHKLLTGRREQFATLRQHGGLSGFTCRDESPHDPFGAGHASTSISAGLGMAVARDLAKEDYSVISVIGDGAISGGMSFEAINNAGHLHTKFIVILNDNGMAISPSTGALSKFLNNVRFDPRFEFAKRNAKQTITNMPFGKAVWAFTKSIKRKFEKSMLPGSLWEELGFIYLGPVDGHNIRELEAALKRAKDFESKPVLIHMITKKGKGYDDAEADAVKYHGISPKSGGLKSSHGLSYSQVFGQTLHKIMSQNPQVVAITAAMTDGCGLGEIAAAFPDRVFDVGICEQHAVTFAAGMATQGYIPVVVIYSTFLQRGFDQIIHDVCLQKLPVVFAIDRGGIVGDDGKTHQGIFDLSFMSLIPDMVVSAPSDENDLQHLLYTAVNSGKPFALRYPRGFGEGVEIESSLHNIPIGQNEILVNGSDVAILATGKSVAFAREALEILTESGIKPTLVNNRYISPLDSELVLKIAQSHKYLVTVEENVISGGLGSRINTLLAEAGLVNKIKIANIGIPDKFVEHGNQSLLRAKYGLDGKGIAQRVLSLVGNPNEMKHPQIICP.

Thiamine diphosphate contacts are provided by residues His-74 and 115–117; that span reads GHA. Mg(2+) is bound at residue Asp-146. Residues 147–148, Asn-175, Tyr-286, and Glu-363 each bind thiamine diphosphate; that span reads GA. Residue Asn-175 coordinates Mg(2+).

This sequence belongs to the transketolase family. DXPS subfamily. As to quaternary structure, homodimer. Mg(2+) is required as a cofactor. Thiamine diphosphate serves as cofactor.

It catalyses the reaction D-glyceraldehyde 3-phosphate + pyruvate + H(+) = 1-deoxy-D-xylulose 5-phosphate + CO2. Its pathway is metabolic intermediate biosynthesis; 1-deoxy-D-xylulose 5-phosphate biosynthesis; 1-deoxy-D-xylulose 5-phosphate from D-glyceraldehyde 3-phosphate and pyruvate: step 1/1. Its function is as follows. Catalyzes the acyloin condensation reaction between C atoms 2 and 3 of pyruvate and glyceraldehyde 3-phosphate to yield 1-deoxy-D-xylulose-5-phosphate (DXP). The sequence is that of 1-deoxy-D-xylulose-5-phosphate synthase from Dehalococcoides mccartyi (strain ATCC BAA-2100 / JCM 16839 / KCTC 5957 / BAV1).